The chain runs to 256 residues: Acetylglutamate kinase (256 aa).

Substrate contacts are provided by residues 40-41 (GG), Arg-62, and Asn-154.

The protein belongs to the acetylglutamate kinase family. ArgB subfamily.

The protein localises to the cytoplasm. The enzyme catalyses N-acetyl-L-glutamate + ATP = N-acetyl-L-glutamyl 5-phosphate + ADP. Its pathway is amino-acid biosynthesis; L-arginine biosynthesis; N(2)-acetyl-L-ornithine from L-glutamate: step 2/4. Its function is as follows. Catalyzes the ATP-dependent phosphorylation of N-acetyl-L-glutamate. The chain is Acetylglutamate kinase from Staphylococcus aureus (strain bovine RF122 / ET3-1).